We begin with the raw amino-acid sequence, 440 residues long: Lipopolysaccharide-processing protein LpsZ (440 aa).

To E.coli capsule polysaccharide export protein KpsC.

It localises to the cytoplasm. Involved in the invasion of nitrogen fixation nodules. May be involved in the biosynthesis of lipopolysaccharides as an enzyme or a regulatory protein. This Rhizobium meliloti (Ensifer meliloti) protein is Lipopolysaccharide-processing protein LpsZ (lpsZ).